A 455-amino-acid polypeptide reads, in one-letter code: Beta-1,4-mannosyltransferase bre-3 (455 aa).

It belongs to the glycosyltransferase 2 family.

It is found in the cytoplasm. It participates in protein modification; protein glycosylation. In terms of biological role, glycosyltransferase with a proposed role in glycosphingolipid biosynthesis. Involved in susceptibility to pore-forming crystal toxins in conjunction with bre-1, bre-2 and bre-4. Involved in resistance to the nematotoxic C.cinerea galectin Cgl2. Has a role in determining brood size. This Caenorhabditis briggsae protein is Beta-1,4-mannosyltransferase bre-3.